A 468-amino-acid polypeptide reads, in one-letter code: MSQGKIVQIIGAVVDVEFPRESVPKVYDALKVENTEITLEVQQQLGDGVVRCIALGSTDGLKRNLVAVNTGRGISVPVGAGTLGRIMDVLGRPIDEAGPVAASDSWEIHRDAPSYEDQSPATELLETGIKVIDLMCPFAKGGKVGLFGGAGVGKTVNMMELINNIAKAHSGLSVFAGVGERTREGNDFYHEMKDSNVLDKVAMVYGQMNEPPGNRLRVALTGLTMAEYFRDEKDENGKGKDVLLFVDNIYRYTLAGTEVSALLGRMPSAVGYQPTLAEEMGVLQERITSTKNGSITSIQAVYVPADDLTDPSPATTFAHLDSTVTLSRSIASLGIYPAVDPLDSTSRQMDPLVIGHEHYDTAQRVQQTLQKYKELKDIIAILGMDELSEEDKQAVSRARKIERFFSQPFHVAEVFTGSPGKYVSLKDTIRGFKAIVDGEYDHLPEQAFYMVGSIEEAVEKAKKMAEKA.

An ATP-binding site is contributed by 148–155 (GGAGVGKT).

It belongs to the ATPase alpha/beta chains family. In terms of assembly, F-type ATPases have 2 components, CF(1) - the catalytic core - and CF(0) - the membrane proton channel. CF(1) has five subunits: alpha(3), beta(3), gamma(1), delta(1), epsilon(1). CF(0) has three main subunits: a(1), b(2) and c(9-12). The alpha and beta chains form an alternating ring which encloses part of the gamma chain. CF(1) is attached to CF(0) by a central stalk formed by the gamma and epsilon chains, while a peripheral stalk is formed by the delta and b chains.

The protein resides in the cell inner membrane. It catalyses the reaction ATP + H2O + 4 H(+)(in) = ADP + phosphate + 5 H(+)(out). In terms of biological role, produces ATP from ADP in the presence of a proton gradient across the membrane. The catalytic sites are hosted primarily by the beta subunits. This Stenotrophomonas maltophilia (strain R551-3) protein is ATP synthase subunit beta.